The following is a 101-amino-acid chain: Conantokin-L (101 aa).

Residues Met-1–Gly-21 form the signal peptide. Residues Thr-22–Arg-80 constitute a propeptide that is removed on maturation. Residues Glu-83, Glu-84, Glu-91, and Glu-95 each carry the 4-carboxyglutamate modification. The a divalent metal cation site is built by Glu-91 and Glu-95. The residue at position 99 (Asn-99) is an Asparagine amide.

Belongs to the conotoxin B superfamily. It depends on Ca(2+) as a cofactor. Mg(2+) is required as a cofactor. As to expression, expressed by the venom duct.

The protein resides in the secreted. Functionally, conantokins inhibit N-methyl-D-aspartate (NMDA) receptors. This toxin is far less potent as an anticonvulsant compound than conantokin-R. It induces sleep-like symptoms in mice. This Conus lynceus (Lynceus cone) protein is Conantokin-L.